Consider the following 200-residue polypeptide: Holliday junction resolvase RecU (200 aa).

Mg(2+) contacts are provided by threonine 85, aspartate 87, glutamate 100, and glutamine 119.

It belongs to the RecU family. The cofactor is Mg(2+).

The protein localises to the cytoplasm. It carries out the reaction Endonucleolytic cleavage at a junction such as a reciprocal single-stranded crossover between two homologous DNA duplexes (Holliday junction).. Functionally, endonuclease that resolves Holliday junction intermediates in genetic recombination. Cleaves mobile four-strand junctions by introducing symmetrical nicks in paired strands. Promotes annealing of linear ssDNA with homologous dsDNA. Required for DNA repair, homologous recombination and chromosome segregation. The polypeptide is Holliday junction resolvase RecU (Bacillus cytotoxicus (strain DSM 22905 / CIP 110041 / 391-98 / NVH 391-98)).